Reading from the N-terminus, the 244-residue chain is tRNA pseudouridine synthase A (244 aa).

Aspartate 53 serves as the catalytic Nucleophile. Substrate is bound at residue tyrosine 111.

The protein belongs to the tRNA pseudouridine synthase TruA family. Homodimer.

It carries out the reaction uridine(38/39/40) in tRNA = pseudouridine(38/39/40) in tRNA. Formation of pseudouridine at positions 38, 39 and 40 in the anticodon stem and loop of transfer RNAs. The chain is tRNA pseudouridine synthase A from Bacillus sp. (strain KSM-64).